The sequence spans 571 residues: Urease subunit alpha (571 aa).

Residues 134–571 (GAIDTHIHFI…LPMAQRYFLF (438 aa)) enclose the Urease domain. His-139, His-141, and Lys-222 together coordinate Ni(2+). The residue at position 222 (Lys-222) is an N6-carboxylysine. His-224 serves as a coordination point for substrate. Residues His-251 and His-277 each contribute to the Ni(2+) site. His-325 acts as the Proton donor in catalysis. A Ni(2+)-binding site is contributed by Asp-365.

This sequence belongs to the metallo-dependent hydrolases superfamily. Urease alpha subunit family. Heterotrimer of UreA (gamma), UreB (beta) and UreC (alpha) subunits. Three heterotrimers associate to form the active enzyme. The cofactor is Ni cation. Post-translationally, carboxylation allows a single lysine to coordinate two nickel ions.

Its subcellular location is the cytoplasm. It carries out the reaction urea + 2 H2O + H(+) = hydrogencarbonate + 2 NH4(+). It functions in the pathway nitrogen metabolism; urea degradation; CO(2) and NH(3) from urea (urease route): step 1/1. This chain is Urease subunit alpha, found in Bordetella parapertussis (strain 12822 / ATCC BAA-587 / NCTC 13253).